The chain runs to 496 residues: Pituitary adenylate cyclase-activating polypeptide type I receptor (496 aa).

The signal sequence occupies residues 1–20; sequence MARTLQLSLTALLLLPMAIA. Topologically, residues 21 to 152 are extracellular; the sequence is MHSDCIFKKE…SGDQDYYYLS (132 aa). 3 disulfide bridges follow: Cys-34–Cys-63, Cys-54–Cys-118, and Cys-77–Cys-134. Residues Asn-48, Asn-60, and Asn-117 are each glycosylated (N-linked (GlcNAc...) asparagine). Residues 125–139 form an important for ADCYAP1/PACAP ligand binding and specificity region; sequence EPFPHYFDACGFDDY. Residues 125-139 form an important for ligand binding and specificity region; that stretch reads EPFPHYFDACGFDDY. The helical transmembrane segment at 153 to 177 threads the bilayer; sequence VKALYTVGYSTSLVTLTTAMVILCR. Residues 178–187 are Cytoplasmic-facing; sequence FRKLHCTRNF. A helical transmembrane segment spans residues 188–208; the sequence is IHMNLFVSFMLRAISVFIKDW. Topologically, residues 209 to 223 are extracellular; that stretch reads ILYAEQDSSHCFVST. A helical transmembrane segment spans residues 224-249; sequence VECKAVMVFFHYCVVSNYFWLFIEGL. Cys-226 and Cys-296 are disulfide-bonded. Residues 250–267 are Cytoplasmic-facing; that stretch reads YLFTLLVETFFPERRYFY. Residues 268-290 form a helical membrane-spanning segment; it reads WYTIIGWGTPTVCVTVWAVLRLY. Residues 291 to 302 are Extracellular-facing; sequence FDDAGCWDMNDS. A helical transmembrane segment spans residues 303 to 329; it reads TALWWVIKGPVVGSIMVNFVLFIGIII. Topologically, residues 330-347 are cytoplasmic; that stretch reads ILVQKLQSPDMGGNESSI. A helical transmembrane segment spans residues 348 to 402; the sequence is YFSCVQKCYCKPQRAQQHSCKMSELSTITLRLARSTLLLIPLFGIHYTVFAFSPE. The Extracellular segment spans residues 403–407; sequence NVSKR. The helical transmembrane segment at 408 to 431 threads the bilayer; sequence ERLVFELGLGSFQGFVVAVLYCFL. Residues 432–496 are Cytoplasmic-facing; sequence NGEVQAEIKR…SSLPADNLAT (65 aa). Phosphoserine occurs at positions 462 and 475.

Belongs to the G-protein coupled receptor 2 family. As to quaternary structure, interacts with maxadilan, a vasodilator peptide from Lutzomyia longipalpis saliva; the interaction results in ADCYAP1R1 activation.

It is found in the cell membrane. In terms of biological role, g protein-coupled receptor activated by the neuropeptide pituitary adenylate cyclase-activating polypeptide (ADCYAP1/PACAP). Binds both PACAP27 and PACAP38 bioactive peptides. Ligand binding causes a conformation change that triggers signaling via guanine nucleotide-binding proteins (G proteins) and modulates the activity of downstream effectors. Activates cAMP-dependent pathway. May regulate the release of adrenocorticotropin, luteinizing hormone, growth hormone, prolactin, epinephrine, and catecholamine. May play a role in spermatogenesis and sperm motility. Causes smooth muscle relaxation and secretion in the gastrointestinal tract. This is Pituitary adenylate cyclase-activating polypeptide type I receptor from Mus musculus (Mouse).